Consider the following 391-residue polypeptide: Putative F-box protein At1g47730 (391 aa).

The span at 1 to 12 shows a compositional bias: basic and acidic residues; it reads MEQREEKTENIQ. Residues 1–25 are disordered; the sequence is MEQREEKTENIQRKRSRGKSSSSSL. In terms of domain architecture, F-box spans 19 to 68; sequence KSSSSSLPLDLTSEIFSRLPAKSVVRFRCVSKLWSSITTAPYFTNSFETR.

The protein is Putative F-box protein At1g47730 of Arabidopsis thaliana (Mouse-ear cress).